The chain runs to 358 residues: Fructose-bisphosphate aldolase (358 aa).

Serine 62 serves as a coordination point for D-glyceraldehyde 3-phosphate. Aspartate 109 functions as the Proton donor in the catalytic mechanism. Zn(2+) contacts are provided by histidine 110, aspartate 144, glutamate 174, and histidine 226. Dihydroxyacetone phosphate is bound at residue glycine 227. Histidine 264 lines the Zn(2+) pocket. Dihydroxyacetone phosphate-binding positions include 265 to 267 (GGS) and 286 to 289 (NIDT).

This sequence belongs to the class II fructose-bisphosphate aldolase family. Zn(2+) serves as cofactor.

It catalyses the reaction beta-D-fructose 1,6-bisphosphate = D-glyceraldehyde 3-phosphate + dihydroxyacetone phosphate. It functions in the pathway carbohydrate degradation; glycolysis; D-glyceraldehyde 3-phosphate and glycerone phosphate from D-glucose: step 4/4. Functionally, catalyzes the aldol condensation of dihydroxyacetone phosphate (DHAP or glycerone-phosphate) with glyceraldehyde 3-phosphate (G3P) to form fructose 1,6-bisphosphate (FBP) in gluconeogenesis and the reverse reaction in glycolysis. The chain is Fructose-bisphosphate aldolase (fba) from Edwardsiella ictaluri (strain 93-146).